The primary structure comprises 433 residues: Histidinol dehydrogenase (433 aa).

Tyr-133, Gln-194, and Asn-217 together coordinate NAD(+). Substrate contacts are provided by Ser-240, Gln-262, and His-265. The Zn(2+) site is built by Gln-262 and His-265. Residues Glu-330 and His-331 each act as proton acceptor in the active site. Residues His-331, Asp-364, Glu-418, and His-423 each contribute to the substrate site. Asp-364 serves as a coordination point for Zn(2+). Position 423 (His-423) interacts with Zn(2+).

Belongs to the histidinol dehydrogenase family. It depends on Zn(2+) as a cofactor.

The catalysed reaction is L-histidinol + 2 NAD(+) + H2O = L-histidine + 2 NADH + 3 H(+). Its pathway is amino-acid biosynthesis; L-histidine biosynthesis; L-histidine from 5-phospho-alpha-D-ribose 1-diphosphate: step 9/9. Its function is as follows. Catalyzes the sequential NAD-dependent oxidations of L-histidinol to L-histidinaldehyde and then to L-histidine. In Dechloromonas aromatica (strain RCB), this protein is Histidinol dehydrogenase.